A 146-amino-acid polypeptide reads, in one-letter code: Large ribosomal subunit protein uL15 (146 aa).

Positions 1–13 (MKLNELKPNEGSR) are enriched in basic and acidic residues. Positions 1–54 (MKLNELKPNEGSRRNRKRVGRGTSSGYGKTAGRGQKGQLARTGGKTRLGFEGGQ) are disordered. Positions 23-35 (TSSGYGKTAGRGQ) are enriched in gly residues.

The protein belongs to the universal ribosomal protein uL15 family. As to quaternary structure, part of the 50S ribosomal subunit.

Binds to the 23S rRNA. This chain is Large ribosomal subunit protein uL15, found in Lactobacillus gasseri (strain ATCC 33323 / DSM 20243 / BCRC 14619 / CIP 102991 / JCM 1131 / KCTC 3163 / NCIMB 11718 / NCTC 13722 / AM63).